The chain runs to 128 residues: Aspartate 1-decarboxylase (128 aa).

The Schiff-base intermediate with substrate; via pyruvic acid role is filled by serine 25. Serine 25 bears the Pyruvic acid (Ser) mark. Threonine 57 is a binding site for substrate. Tyrosine 58 (proton donor) is an active-site residue. Position 73-75 (73-75) interacts with substrate; that stretch reads GSA.

Belongs to the PanD family. Heterooctamer of four alpha and four beta subunits. Requires pyruvate as cofactor. In terms of processing, is synthesized initially as an inactive proenzyme, which is activated by self-cleavage at a specific serine bond to produce a beta-subunit with a hydroxyl group at its C-terminus and an alpha-subunit with a pyruvoyl group at its N-terminus.

The protein localises to the cytoplasm. The enzyme catalyses L-aspartate + H(+) = beta-alanine + CO2. The protein operates within cofactor biosynthesis; (R)-pantothenate biosynthesis; beta-alanine from L-aspartate: step 1/1. Its function is as follows. Catalyzes the pyruvoyl-dependent decarboxylation of aspartate to produce beta-alanine. The polypeptide is Aspartate 1-decarboxylase (Burkholderia cenocepacia (strain HI2424)).